A 597-amino-acid polypeptide reads, in one-letter code: Lysine--tRNA ligase (597 aa).

Positions 501 and 508 each coordinate Mg(2+).

It belongs to the class-II aminoacyl-tRNA synthetase family. In terms of assembly, homodimer. Mg(2+) is required as a cofactor.

Its subcellular location is the cytoplasm. The enzyme catalyses tRNA(Lys) + L-lysine + ATP = L-lysyl-tRNA(Lys) + AMP + diphosphate. The chain is Lysine--tRNA ligase (lysS) from Aquifex aeolicus (strain VF5).